The following is a 155-amino-acid chain: Transcriptional regulator MraZ (155 aa).

2 SpoVT-AbrB domains span residues 7 to 63 and 92 to 135; these read REQH…EPSV and LDQT…EPLR.

Belongs to the MraZ family. Forms oligomers.

The protein localises to the cytoplasm. Its subcellular location is the nucleoid. The protein is Transcriptional regulator MraZ of Chlorobaculum tepidum (strain ATCC 49652 / DSM 12025 / NBRC 103806 / TLS) (Chlorobium tepidum).